A 126-amino-acid polypeptide reads, in one-letter code: Fluoride-specific ion channel FluC (126 aa).

The next 4 membrane-spanning stretches (helical) occupy residues Val6–Ala26, Thr32–Ile52, Leu68–Gly90, and Leu102–Ala122. 2 residues coordinate Na(+): Gly76 and Thr79.

It belongs to the fluoride channel Fluc/FEX (TC 1.A.43) family.

It localises to the cell inner membrane. It carries out the reaction fluoride(in) = fluoride(out). Its activity is regulated as follows. Na(+) is not transported, but it plays an essential structural role and its presence is essential for fluoride channel function. Fluoride-specific ion channel. Important for reducing fluoride concentration in the cell, thus reducing its toxicity. The polypeptide is Fluoride-specific ion channel FluC (Chlorobaculum tepidum (strain ATCC 49652 / DSM 12025 / NBRC 103806 / TLS) (Chlorobium tepidum)).